We begin with the raw amino-acid sequence, 274 residues long: 23S rRNA (adenosine(1067)-2'-O)-methyltransferase (274 aa).

S-adenosyl-L-methionine is bound by residues Arg165, Leu195, 218-220, 238-240, and 247-252; these read GSE, IPM, and LNVSVS.

It belongs to the class IV-like SAM-binding methyltransferase superfamily. RNA methyltransferase TsnR/AvirB family. Homodimer.

The enzyme catalyses adenosine(1067) in 23S rRNA + S-adenosyl-L-methionine = 2'-O-methyladenosine(1067) in 23S rRNA + S-adenosyl-L-homocysteine + H(+). Specifically methylates the adenosine-1067 in 23S ribosomal RNA. Confers resistance to antibiotic nosiheptide. This Streptomyces actuosus protein is 23S rRNA (adenosine(1067)-2'-O)-methyltransferase.